The following is a 154-amino-acid chain: uncharacterized protein (154 aa).

The segment at 1–37 (MDNLKEKPLSYNINNNNLNNNNNNNNNNNNNNNNINN) is disordered. Residues 12–37 (NINNNNLNNNNNNNNNNNNNNNNINN) show a composition bias toward low complexity. N-linked (GlcNAc...) asparagine glycosylation occurs at N82. The chain crosses the membrane as a helical span at residues 116–136 (IIITTIVVLLMIAVSLGLILA). N-linked (GlcNAc...) asparagine glycosylation is present at N149.

It localises to the membrane. This is an uncharacterized protein from Dictyostelium discoideum (Social amoeba).